The chain runs to 244 residues: uncharacterized protein (244 aa).

The 240-residue stretch at 5–244 (QLLLAHRGYS…ANKKFEIKIN (240 aa)) folds into the GP-PDE domain.

This sequence to glycerophosphoryl diester phosphodiesterases (EC 3.1.4.46). It to M.genitalium MG385.

This is an uncharacterized protein from Mycoplasma genitalium (strain ATCC 33530 / DSM 19775 / NCTC 10195 / G37) (Mycoplasmoides genitalium).